Consider the following 262-residue polypeptide: Serine/arginine-rich SC35-like splicing factor SCL30A (262 aa).

Disordered stretches follow at residues M1 to S38 and E115 to Q262. Phosphoserine is present on residues S9 and S20. The RRM domain occupies T37–E115. Residues E115–R140 show a composition bias toward basic and acidic residues. The span at P150 to S161 shows a compositional bias: basic residues. Phosphoserine occurs at positions 166, 174, 176, and 178. Residues Q180–Y190 show a composition bias toward basic and acidic residues. 2 positions are modified to phosphoserine: S191 and S193. Over residues V209–R226 the composition is skewed to basic residues. Residues R234–P246 are compositionally biased toward low complexity. Phosphoserine is present on residues S235, S259, and S261.

The protein belongs to the splicing factor SR family. SCL subfamily. Component of the spliceosome. Interacts with SNRNP35, CYP59 and RS2Z33.

The protein resides in the nucleus speckle. Involved in intron recognition and spliceosome assembly. Binds probably to multiple 5'-GAAG-3' repeats found in its third intron, suggesting autoregulation of alternative splicing. May be necessary for accurate splicing of the 3' region of introns. This Arabidopsis thaliana (Mouse-ear cress) protein is Serine/arginine-rich SC35-like splicing factor SCL30A (SCL30A).